A 150-amino-acid polypeptide reads, in one-letter code: Late promoter-activating protein (150 aa).

Functionally, trans-activating factor involved in the late regulation of the P1 lytic growth cycle. May be the transcriptional activator of all late P1 functions. The sequence is that of Late promoter-activating protein (lpa) from Escherichia phage P1 (Bacteriophage P1).